A 301-amino-acid polypeptide reads, in one-letter code: Ornithine carbamoyltransferase (301 aa).

Carbamoyl phosphate contacts are provided by residues 46–49 (STRT), glutamine 73, arginine 97, and 124–127 (HPCQ). L-ornithine contacts are provided by residues asparagine 154, aspartate 218, and 222 to 223 (SM). Carbamoyl phosphate-binding positions include 258–259 (CL) and arginine 286.

It belongs to the aspartate/ornithine carbamoyltransferase superfamily. OTCase family.

It localises to the cytoplasm. The enzyme catalyses carbamoyl phosphate + L-ornithine = L-citrulline + phosphate + H(+). It functions in the pathway amino-acid biosynthesis; L-arginine biosynthesis; L-arginine from L-ornithine and carbamoyl phosphate: step 1/3. Its function is as follows. Reversibly catalyzes the transfer of the carbamoyl group from carbamoyl phosphate (CP) to the N(epsilon) atom of ornithine (ORN) to produce L-citrulline. This chain is Ornithine carbamoyltransferase (argF), found in Methanothermobacter thermautotrophicus (strain ATCC 29096 / DSM 1053 / JCM 10044 / NBRC 100330 / Delta H) (Methanobacterium thermoautotrophicum).